The primary structure comprises 652 residues: Drebrin (652 aa).

Ala2 is subject to N-acetylalanine. The 130-residue stretch at 5–134 (GFAAHRLELL…DPGAIGQRLS (130 aa)) folds into the ADF-H domain. 2 stretches are compositionally biased toward basic and acidic residues: residues 211 to 236 (MEQE…EEHR) and 288 to 298 (DNPREFFKQQE). 2 disordered regions span residues 211 to 350 (MEQE…YITC) and 371 to 652 (SAAG…GGGL). Positions 328–340 (SGPPSSSSSSSSP) are enriched in low complexity. Residues 507 to 517 (PDTPAGPPVPP) show a composition bias toward pro residues. Composition is skewed to acidic residues over residues 540–554 (QHEE…EEAT) and 640–652 (PLPE…GGGL).

Brain neurons.

It localises to the cytoplasm. Its subcellular location is the cell projection. The protein resides in the dendrite. The protein localises to the cell cortex. It is found in the cell junction. It localises to the growth cone. Functionally, actin cytoskeleton-organizing protein that plays a role in the formation of cell projections. Plays a role in dendritic spine morphogenesis and organization, including the localization of the dopamine receptor DRD1 to the dendritic spines. Involved in synaptic plasticity. The sequence is that of Drebrin (DBN1) from Gallus gallus (Chicken).